The sequence spans 491 residues: Cobyric acid synthase (491 aa).

Residues 246–435 enclose the GATase cobBQ-type domain; sequence KIDVAVIKLP…IHGIFDGANF (190 aa). Cys327 functions as the Nucleophile in the catalytic mechanism. His427 is an active-site residue.

It belongs to the CobB/CobQ family. CobQ subfamily.

It participates in cofactor biosynthesis; adenosylcobalamin biosynthesis. Its function is as follows. Catalyzes amidations at positions B, D, E, and G on adenosylcobyrinic A,C-diamide. NH(2) groups are provided by glutamine, and one molecule of ATP is hydrogenolyzed for each amidation. The sequence is that of Cobyric acid synthase from Clostridium acetobutylicum (strain ATCC 824 / DSM 792 / JCM 1419 / IAM 19013 / LMG 5710 / NBRC 13948 / NRRL B-527 / VKM B-1787 / 2291 / W).